We begin with the raw amino-acid sequence, 342 residues long: Nicotinate-nucleotide--dimethylbenzimidazole phosphoribosyltransferase (342 aa).

The Proton acceptor role is filled by Glu-311.

This sequence belongs to the CobT family.

The catalysed reaction is 5,6-dimethylbenzimidazole + nicotinate beta-D-ribonucleotide = alpha-ribazole 5'-phosphate + nicotinate + H(+). Its pathway is nucleoside biosynthesis; alpha-ribazole biosynthesis; alpha-ribazole from 5,6-dimethylbenzimidazole: step 1/2. Functionally, catalyzes the synthesis of alpha-ribazole-5'-phosphate from nicotinate mononucleotide (NAMN) and 5,6-dimethylbenzimidazole (DMB). The polypeptide is Nicotinate-nucleotide--dimethylbenzimidazole phosphoribosyltransferase (Photobacterium profundum (strain SS9)).